Here is a 543-residue protein sequence, read N- to C-terminus: uncharacterized protein (543 aa).

In terms of domain architecture, TRAM spans 1-59 (MLKKNDIVEVEIVDLTHEGAGVAKVDGLVFFVENALPSEKILMRVLKVNKKIGFGKVEK). S-adenosyl-L-methionine is bound by residues Q283, Y312, E333, and D381. C408 acts as the Nucleophile in catalysis.

It belongs to the class I-like SAM-binding methyltransferase superfamily. RNA M5U methyltransferase family.

This is an uncharacterized protein from Streptococcus pneumoniae serotype 4 (strain ATCC BAA-334 / TIGR4).